A 381-amino-acid chain; its full sequence is tRNA-specific 2-thiouridylase MnmA (381 aa).

Residues 26–33 (AMSGGVDS) and leucine 52 each bind ATP. Residue cysteine 120 is the Nucleophile of the active site. Cysteine 120 and cysteine 217 are joined by a disulfide. Glycine 144 lines the ATP pocket. The tract at residues 166–168 (RDQ) is interaction with tRNA. The Cysteine persulfide intermediate role is filled by cysteine 217.

The protein belongs to the MnmA/TRMU family.

Its subcellular location is the cytoplasm. The catalysed reaction is S-sulfanyl-L-cysteinyl-[protein] + uridine(34) in tRNA + AH2 + ATP = 2-thiouridine(34) in tRNA + L-cysteinyl-[protein] + A + AMP + diphosphate + H(+). Functionally, catalyzes the 2-thiolation of uridine at the wobble position (U34) of tRNA, leading to the formation of s(2)U34. The sequence is that of tRNA-specific 2-thiouridylase MnmA from Ruegeria sp. (strain TM1040) (Silicibacter sp.).